A 351-amino-acid chain; its full sequence is Fe(3+) ions import ATP-binding protein FbpC (351 aa).

Residues 9–239 (LVLKNINKTF…PNSLFLANFM (231 aa)) form the ABC transporter domain. Position 41-48 (41-48 (GPSGCGKT)) interacts with ATP.

It belongs to the ABC transporter superfamily. Fe(3+) ion importer (TC 3.A.1.10) family. As to quaternary structure, the complex is composed of two ATP-binding proteins (FbpC), two transmembrane proteins (FbpB) and a solute-binding protein (FbpA).

It localises to the cell inner membrane. The enzyme catalyses Fe(3+)(out) + ATP + H2O = Fe(3+)(in) + ADP + phosphate + H(+). In terms of biological role, part of the ABC transporter complex FbpABC involved in Fe(3+) ions import. Responsible for energy coupling to the transport system. The polypeptide is Fe(3+) ions import ATP-binding protein FbpC (Mannheimia succiniciproducens (strain KCTC 0769BP / MBEL55E)).